A 284-amino-acid polypeptide reads, in one-letter code: 4-diphosphocytidyl-2-C-methyl-D-erythritol kinase (284 aa).

Residue Lys22 is part of the active site. 104–114 (PVGAGLGGASS) is a binding site for ATP. The active site involves Asp146.

This sequence belongs to the GHMP kinase family. IspE subfamily.

The catalysed reaction is 4-CDP-2-C-methyl-D-erythritol + ATP = 4-CDP-2-C-methyl-D-erythritol 2-phosphate + ADP + H(+). Its pathway is isoprenoid biosynthesis; isopentenyl diphosphate biosynthesis via DXP pathway; isopentenyl diphosphate from 1-deoxy-D-xylulose 5-phosphate: step 3/6. Its function is as follows. Catalyzes the phosphorylation of the position 2 hydroxy group of 4-diphosphocytidyl-2C-methyl-D-erythritol. The sequence is that of 4-diphosphocytidyl-2-C-methyl-D-erythritol kinase from Hydrogenobaculum sp. (strain Y04AAS1).